The following is a 360-amino-acid chain: Protein MGF 360-1L (360 aa).

The protein belongs to the asfivirus MGF 360 family.

Its function is as follows. Plays a role in virus cell tropism, and may be required for efficient virus replication in macrophages. In African swine fever virus (strain Badajoz 1971 Vero-adapted) (Ba71V), this protein is Protein MGF 360-1L.